A 144-amino-acid polypeptide reads, in one-letter code: MAQQILVLHGPNLNLLGSREPHLYGSLTLAQINQGLETLAAQLGVGLTAWQSNHEGALVERIQAARQDGTDFIIINAAAYTHTSVAVRDALAAVAIPFIEVHLSNLYKREPFRQHSYLSDLAVGLVCGLGADGYEAAVRYAARH.

The Proton acceptor role is filled by Y24. Positions 76, 82, and 89 each coordinate substrate. The active-site Proton donor is H102. Substrate is bound by residues 103 to 104 (LS) and R113.

The protein belongs to the type-II 3-dehydroquinase family. In terms of assembly, homododecamer.

The catalysed reaction is 3-dehydroquinate = 3-dehydroshikimate + H2O. It functions in the pathway metabolic intermediate biosynthesis; chorismate biosynthesis; chorismate from D-erythrose 4-phosphate and phosphoenolpyruvate: step 3/7. Its function is as follows. Catalyzes a trans-dehydration via an enolate intermediate. The polypeptide is 3-dehydroquinate dehydratase (Bordetella petrii (strain ATCC BAA-461 / DSM 12804 / CCUG 43448)).